The primary structure comprises 369 residues: tRNA/tmRNA (uracil-C(5))-methyltransferase (369 aa).

S-adenosyl-L-methionine is bound by residues Gln193, Tyr221, Asn226, Glu242, and Asp302. Catalysis depends on Cys327, which acts as the Nucleophile. Glu361 (proton acceptor) is an active-site residue.

The protein belongs to the class I-like SAM-binding methyltransferase superfamily. RNA M5U methyltransferase family. TrmA subfamily.

It carries out the reaction uridine(54) in tRNA + S-adenosyl-L-methionine = 5-methyluridine(54) in tRNA + S-adenosyl-L-homocysteine + H(+). The catalysed reaction is uridine(341) in tmRNA + S-adenosyl-L-methionine = 5-methyluridine(341) in tmRNA + S-adenosyl-L-homocysteine + H(+). Its function is as follows. Dual-specificity methyltransferase that catalyzes the formation of 5-methyluridine at position 54 (m5U54) in all tRNAs, and that of position 341 (m5U341) in tmRNA (transfer-mRNA). In Sulfurimonas denitrificans (strain ATCC 33889 / DSM 1251) (Thiomicrospira denitrificans (strain ATCC 33889 / DSM 1251)), this protein is tRNA/tmRNA (uracil-C(5))-methyltransferase.